The following is a 174-amino-acid chain: Co-chaperone protein HscB homolog (174 aa).

The 73-residue stretch at 2 to 74 (NYFELFKFSP…IRRAEHMLSL (73 aa)) folds into the J domain.

The protein belongs to the HscB family. As to quaternary structure, interacts with HscA and stimulates its ATPase activity.

In terms of biological role, co-chaperone involved in the maturation of iron-sulfur cluster-containing proteins. Seems to help targeting proteins to be folded toward HscA. This chain is Co-chaperone protein HscB homolog, found in Shewanella baltica (strain OS155 / ATCC BAA-1091).